The following is a 312-amino-acid chain: Ribosomal RNA small subunit methyltransferase H (312 aa).

S-adenosyl-L-methionine is bound by residues Ala34 to His36, Asp54, Phe81, Asp102, and Gln109.

The protein belongs to the methyltransferase superfamily. RsmH family.

It is found in the cytoplasm. It carries out the reaction cytidine(1402) in 16S rRNA + S-adenosyl-L-methionine = N(4)-methylcytidine(1402) in 16S rRNA + S-adenosyl-L-homocysteine + H(+). Specifically methylates the N4 position of cytidine in position 1402 (C1402) of 16S rRNA. The chain is Ribosomal RNA small subunit methyltransferase H from Geotalea daltonii (strain DSM 22248 / JCM 15807 / FRC-32) (Geobacter daltonii).